A 317-amino-acid chain; its full sequence is Ciliary microtubule inner protein 2A (317 aa).

A disordered region spans residues 131-153 (TPDTPHPPCPPGRKGDSRDLGHP).

This sequence belongs to the CIMIP2 family. As to quaternary structure, microtubule inner protein component of sperm flagellar doublet microtubules.

Its subcellular location is the cytoplasm. It is found in the cytoskeleton. The protein resides in the flagellum axoneme. Microtubule inner protein (MIP) part of the dynein-decorated doublet microtubules (DMTs) in flagellum axoneme. Binds to the intra-tubulin interfaces. In Homo sapiens (Human), this protein is Ciliary microtubule inner protein 2A.